The following is a 92-amino-acid chain: Large ribosomal subunit protein bL25 (92 aa).

This sequence belongs to the bacterial ribosomal protein bL25 family. Part of the 50S ribosomal subunit; part of the 5S rRNA/L5/L18/L25 subcomplex. Contacts the 5S rRNA. Binds to the 5S rRNA independently of L5 and L18.

This is one of the proteins that binds to the 5S RNA in the ribosome where it forms part of the central protuberance. The polypeptide is Large ribosomal subunit protein bL25 (Photobacterium damsela subsp. piscicida (Pasteurella piscicida)).